The primary structure comprises 422 residues: Carboxypeptidase B2 (422 aa).

Residues 1 to 21 form the signal peptide; the sequence is MKLHGLGILVAIILYEQHGFA. A propeptide spans 22–113 (activation peptide); sequence FQSGQVLSAL…QTFNDTVSPR (92 aa). N-linked (GlcNAc...) asparagine glycans are attached at residues asparagine 43, asparagine 72, asparagine 84, and asparagine 107. In terms of domain architecture, Peptidase M14 spans 121–418; the sequence is QYHSLNEIYS…AAISKIVWHV (298 aa). Cysteines 177 and 190 form a disulfide. Zn(2+) contacts are provided by histidine 180 and glutamate 183. Substrate-binding positions include 180-183 and arginine 238; that span reads HARE. An N-linked (GlcNAc...) asparagine glycan is attached at asparagine 240. 2 cysteine pairs are disulfide-bonded: cysteine 249–cysteine 273 and cysteine 264–cysteine 278. 255-256 lines the substrate pocket; sequence NR. Histidine 309 lines the Zn(2+) pocket. Residue 310–311 participates in substrate binding; that stretch reads SY. Asparagine 322 is a glycosylation site (N-linked (GlcNAc...) asparagine). Tyrosine 362 provides a ligand contact to substrate. Residue glutamate 384 is the Proton donor/acceptor of the active site.

This sequence belongs to the peptidase M14 family. It depends on Zn(2+) as a cofactor. As to expression, plasma; synthesized in the liver.

It localises to the secreted. The catalysed reaction is Release of C-terminal Arg and Lys from a polypeptide.. With respect to regulation, TAFI/CPB2 is unique among carboxypeptidases in that it spontaneously inactivates with a short half-life, a property that is crucial for its role in controlling blood clot lysis. The zymogen is stabilized by interactions with the activation peptide. Release of the activation peptide increases a dynamic flap mobility and in time this leads to conformational changes that disrupt the catalytic site and expose a cryptic thrombin-cleavage site present at Arg-323. In terms of biological role, cleaves C-terminal arginine or lysine residues from biologically active peptides such as kinins or anaphylatoxins in the circulation thereby regulating their activities. Down-regulates fibrinolysis by removing C-terminal lysine residues from fibrin that has already been partially degraded by plasmin. The chain is Carboxypeptidase B2 (Cpb2) from Mus musculus (Mouse).